A 771-amino-acid polypeptide reads, in one-letter code: Hyperosmolality-gated Ca2+ permeable channel 1.2 (771 aa).

The Extracellular portion of the chain corresponds to 1–4 (MATL). Residues 5-27 (QDIGVSAGINILSAFVFFIIFAV) form a helical membrane-spanning segment. At 28 to 100 (LRLQPFNDRV…AGLDSVVYLR (73 aa)) the chain is on the cytoplasmic side. The helical transmembrane segment at 101 to 125 (IYWLGLKIFTPIAVLAWAVLVPVNW) threads the bilayer. At 126–156 (TNNTLEMAKQLRNVTSSDIDKLSVSNIPEYS) the chain is on the extracellular side. The chain crosses the membrane as a helical span at residues 157–178 (MRFWTHIVMAYAFTIWTCYVLM). The Cytoplasmic portion of the chain corresponds to 179–374 (KEYETIANMR…AIPYVSLTVR (196 aa)). The chain crosses the membrane as a helical span at residues 375 to 401 (RLIMHVAFFFLTFFFIVPIAFVQSLAT). Residues 402 to 419 (IEGIVKAAPFLKFIVDDK) are Extracellular-facing. A helical membrane pass occupies residues 420-445 (FMKSVIQGFLPGIALKLFLAFLPSIL). Over 446 to 462 (MIMSKFEGFTSISSLER) the chain is Cytoplasmic. Residues 463–485 (RAAFRYYIFNLVNVFLASVIAGA) form a helical membrane-spanning segment. Topologically, residues 486–504 (AFEQLNSFLNQSANQIPKT) are extracellular. The helical transmembrane segment at 505–533 (IGVAIPMKATFFITYIMVDGWAGVAGEIL) threads the bilayer. Over 534–566 (MLKPLIMFHLKNAFLVKTDKDREEAMDPGSIGF) the chain is Cytoplasmic. Residues 567 to 588 (NTGEPRIQLYFLLGLVYAPVTP) traverse the membrane as a helical segment. Position 589 (Met589) is a topological domain, extracellular. A helical membrane pass occupies residues 590 to 605 (LLPFILVFFALAYIVY). Residues 606–625 (RHQIINVYNQEYESAAAFWP) are Cytoplasmic-facing. A helical membrane pass occupies residues 626-648 (DVHGRVIAALVISQLLLMGLLGT). Residues 649–651 (KHA) are Extracellular-facing. A helical transmembrane segment spans residues 652-670 (ALAAPFLIALPVLTIGFHH). Over 671–771 (FCKGRYEPAF…PSLPFSGKLV (101 aa)) the chain is Cytoplasmic. A disordered region spans residues 741–771 (PTKRQSRRNTPAPSIISGDDSPSLPFSGKLV).

Belongs to the CSC1 (TC 1.A.17) family. In terms of assembly, homodimer.

The protein localises to the membrane. Activated by hyperosmotic shock after mannitol or NaCl treatment. Activated by mechanical pressure: activated in response to membrane stretch and poke. Membrane lipids play a key role in mechanosensation by acting as a wall mainly formed by lipid head groups. Its function is as follows. Acts as an osmosensitive calcium-permeable cation channel. Specifically conducts cations including Ca(2+), K(+) and Na(+) in vitro. Inactivation or closure of the channel is calcium-dependent. Mechanosensitive ion channel that converts mechanical stimuli into a flow of ions: activated in response to membrane stretch and poke. This is Hyperosmolality-gated Ca2+ permeable channel 1.2 from Arabidopsis thaliana (Mouse-ear cress).